The chain runs to 95 residues: MYKTLLAQVFFHSIAKKKLYFFWLPRLFSLLLVPGFLFDIEILFLFHPIILLHASLGLSVIIEDYIHIETIKFQYLSLIKLLLVLLINLNILYLL.

Residues 1 to 19 (MYKTLLAQVFFHSIAKKKL) are Mitochondrial matrix-facing. Residues 20 to 40 (YFFWLPRLFSLLLVPGFLFDI) traverse the membrane as a helical segment. E41 is a topological domain (mitochondrial intermembrane). Residues 42–62 (ILFLFHPIILLHASLGLSVII) form a helical membrane-spanning segment. H53 contacts heme. The Mitochondrial matrix portion of the chain corresponds to 63–74 (EDYIHIETIKFQ). Y65 is a binding site for a ubiquinone. Residues 75-95 (YLSLIKLLLVLLINLNILYLL) traverse the membrane as a helical segment.

In terms of assembly, part of an enzyme complex containing four subunits: a flavoprotein, an iron-sulfur protein, plus two membrane-anchoring proteins. Heme is required as a cofactor.

It is found in the mitochondrion inner membrane. The protein operates within carbohydrate metabolism; tricarboxylic acid cycle. Functionally, membrane-anchoring subunit of succinate dehydrogenase (SDH). The polypeptide is Succinate dehydrogenase membrane anchor subunit (SDH4) (Porphyra purpurea (Red seaweed)).